We begin with the raw amino-acid sequence, 518 residues long: 2-isopropylmalate synthase (518 aa).

One can recognise a Pyruvate carboxyltransferase domain in the interval 5–267 (VIIFDTTLRD…STNIKHKEIY (263 aa)). The Mn(2+) site is built by D14, H202, H204, and N238. Residues 392–518 (SLSFFSVQSI…KLKTLKKVNN (127 aa)) are regulatory domain.

This sequence belongs to the alpha-IPM synthase/homocitrate synthase family. LeuA type 1 subfamily. As to quaternary structure, homodimer. Mn(2+) serves as cofactor.

It is found in the cytoplasm. The enzyme catalyses 3-methyl-2-oxobutanoate + acetyl-CoA + H2O = (2S)-2-isopropylmalate + CoA + H(+). It participates in amino-acid biosynthesis; L-leucine biosynthesis; L-leucine from 3-methyl-2-oxobutanoate: step 1/4. Functionally, catalyzes the condensation of the acetyl group of acetyl-CoA with 3-methyl-2-oxobutanoate (2-ketoisovalerate) to form 3-carboxy-3-hydroxy-4-methylpentanoate (2-isopropylmalate). The sequence is that of 2-isopropylmalate synthase from Buchnera aphidicola subsp. Schizaphis graminum (strain Sg).